Reading from the N-terminus, the 40-residue chain is Photosystem II reaction center protein J (40 aa).

Residues 8–28 (IPLWLIGTVTGIPVIGSIGIF) form a helical membrane-spanning segment.

This sequence belongs to the PsbJ family. PSII is composed of 1 copy each of membrane proteins PsbA, PsbB, PsbC, PsbD, PsbE, PsbF, PsbH, PsbI, PsbJ, PsbK, PsbL, PsbM, PsbT, PsbX, PsbY, PsbZ, Psb30/Ycf12, at least 3 peripheral proteins of the oxygen-evolving complex and a large number of cofactors. It forms dimeric complexes.

The protein resides in the plastid. It localises to the chloroplast thylakoid membrane. One of the components of the core complex of photosystem II (PSII). PSII is a light-driven water:plastoquinone oxidoreductase that uses light energy to abstract electrons from H(2)O, generating O(2) and a proton gradient subsequently used for ATP formation. It consists of a core antenna complex that captures photons, and an electron transfer chain that converts photonic excitation into a charge separation. The protein is Photosystem II reaction center protein J of Chloranthus spicatus (Chulantree).